A 901-amino-acid polypeptide reads, in one-letter code: MLIKLLTKVFGSRNDRTLRRMRKVVNIINAMEPEMEKLSDEELKGKTAEFRARLEKGEVLENLIPEAFAVVREASKRVFGMRHFDVQLLGGMVLNERCIAEMRTGEGKTLTATLPAYLNALTGKGVHVVTVNDYLAQRDAENNRPLFEFLGLTVGINLPGMPAPAKREAYAADITYGTNNEYGFDYLRDNMAFSPEERVQRKLHYALVDEVDSILIDEARTPLIISGPAEDSSEMYKRVNKIIPHLIRQEKEDSETFQGEGHFSVDEKSRQVNLTERGLVLIEELLVKEGIMDEGESLYSPANIMLMHHVTAALRAHALFTRDVDYIVKDGEVIIVDEHTGRTMQGRRWSDGLHQAVEAKEGVQIQNENQTLASITFQNYFRLYEKLAGMTGTADTEAFEFSSIYKLDTVVVPTNRPMIRKDLPDLVYMTEAEKIQAIIEDIKERTAKGQPVLVGTISIEKSELVSNELTKAGIKHNVLNAKFHANEAAIVAQAGYPAAVTIATNMAGRGTDIVLGGSWQAEVAALENPTAEQIEKIKADWQVRHDAVLAAGGLHIIGTERHESRRIDNQLRGRSGRQGDAGSSRFYLSMEDALMRIFASDRVSGMMRKLGMKPGEAIEHPWVTKAIANAQRKVESRNFDIRKQLLEYDDVANDQRRAIYSQRNELLDVSDVSETINSIREDVFKATIDAYIPPQSLEEMWDIPGLQERLKNDFDLDLPIAEWLDKEPELHEETLRERILAQSIEVYQRKEEVVGAEMMRHFEKGVMLQTLDSLWKEHLAAMDYLRQGIHLRGYAQKDPKQEYKRESFSMFAAMLESLKYEVISTLSKVQVRMPEEVEELEQQRRMEAERLAQMQQLSHQDDDSAAAAALAAQTGERKVGRNDPCPCGSGKKYKQCHGRLQ.

Residues Q87, 105–109, and D512 contribute to the ATP site; that span reads GEGKT. The segment at 859-901 is disordered; sequence HQDDDSAAAAALAAQTGERKVGRNDPCPCGSGKKYKQCHGRLQ. C885, C887, C896, and H897 together coordinate Zn(2+). Residues 891–901 show a composition bias toward basic residues; sequence KKYKQCHGRLQ.

The protein belongs to the SecA family. As to quaternary structure, monomer and homodimer. Part of the essential Sec protein translocation apparatus which comprises SecA, SecYEG and auxiliary proteins SecDF-YajC and YidC. Zn(2+) is required as a cofactor.

The protein resides in the cell inner membrane. Its subcellular location is the cytoplasm. It carries out the reaction ATP + H2O + cellular proteinSide 1 = ADP + phosphate + cellular proteinSide 2.. Its function is as follows. Part of the Sec protein translocase complex. Interacts with the SecYEG preprotein conducting channel. Has a central role in coupling the hydrolysis of ATP to the transfer of proteins into and across the cell membrane, serving both as a receptor for the preprotein-SecB complex and as an ATP-driven molecular motor driving the stepwise translocation of polypeptide chains across the membrane. This chain is Protein translocase subunit SecA, found in Escherichia coli O157:H7.